Reading from the N-terminus, the 137-residue chain is MRVPVFQLSCLLGLIVCLLCSVKAQKDDQYDTEKSRILEIYNNPAVDEFTKERNIPKLIEFYRRYPARIQLPDADKRQWDEFVARYTESQTKLVDGLPAQGGWVGSVLSSTVGNLIAKFIFSLIRYDPTTPKPIGAP.

Residues 1–24 (MRVPVFQLSCLLGLIVCLLCSVKA) form the signal peptide.

This sequence belongs to the Turandot family.

It localises to the secreted. In terms of biological role, a humoral factor that may play a role in stress tolerance. The polypeptide is Protein Turandot X (Drosophila pseudoobscura pseudoobscura (Fruit fly)).